The primary structure comprises 456 residues: Bifunctional protein GlmU (456 aa).

The pyrophosphorylase stretch occupies residues 1–229 (MSNSSMSVVI…LSEVEGVNNR (229 aa)). Residues 11–14 (LAAG), Lys-25, Gln-76, 81–82 (GT), 103–105 (YGD), Gly-140, Glu-154, Asn-169, and Asn-227 each bind UDP-N-acetyl-alpha-D-glucosamine. Asp-105 is a Mg(2+) binding site. Residue Asn-227 participates in Mg(2+) binding. The segment at 230–250 (LQLSALERVFQTEQAEKLLLA) is linker. The interval 251 to 456 (GVMLLDPSRF…QGWKRPVKKK (206 aa)) is N-acetyltransferase. Residues Arg-333 and Lys-351 each contribute to the UDP-N-acetyl-alpha-D-glucosamine site. Residue His-363 is the Proton acceptor of the active site. Residues Tyr-366 and Asn-377 each contribute to the UDP-N-acetyl-alpha-D-glucosamine site. Acetyl-CoA is bound by residues Ala-380, 386–387 (NY), Ser-405, Ala-423, and Arg-440.

This sequence in the N-terminal section; belongs to the N-acetylglucosamine-1-phosphate uridyltransferase family. In the C-terminal section; belongs to the transferase hexapeptide repeat family. In terms of assembly, homotrimer. Mg(2+) serves as cofactor.

The protein localises to the cytoplasm. It carries out the reaction alpha-D-glucosamine 1-phosphate + acetyl-CoA = N-acetyl-alpha-D-glucosamine 1-phosphate + CoA + H(+). The enzyme catalyses N-acetyl-alpha-D-glucosamine 1-phosphate + UTP + H(+) = UDP-N-acetyl-alpha-D-glucosamine + diphosphate. Its pathway is nucleotide-sugar biosynthesis; UDP-N-acetyl-alpha-D-glucosamine biosynthesis; N-acetyl-alpha-D-glucosamine 1-phosphate from alpha-D-glucosamine 6-phosphate (route II): step 2/2. It participates in nucleotide-sugar biosynthesis; UDP-N-acetyl-alpha-D-glucosamine biosynthesis; UDP-N-acetyl-alpha-D-glucosamine from N-acetyl-alpha-D-glucosamine 1-phosphate: step 1/1. The protein operates within bacterial outer membrane biogenesis; LPS lipid A biosynthesis. Catalyzes the last two sequential reactions in the de novo biosynthetic pathway for UDP-N-acetylglucosamine (UDP-GlcNAc). The C-terminal domain catalyzes the transfer of acetyl group from acetyl coenzyme A to glucosamine-1-phosphate (GlcN-1-P) to produce N-acetylglucosamine-1-phosphate (GlcNAc-1-P), which is converted into UDP-GlcNAc by the transfer of uridine 5-monophosphate (from uridine 5-triphosphate), a reaction catalyzed by the N-terminal domain. The polypeptide is Bifunctional protein GlmU (Yersinia pseudotuberculosis serotype O:1b (strain IP 31758)).